Consider the following 358-residue polypeptide: MSVRTVAIAAGGTGGHVYPGLAVADALRERGHRVVWLGTRAGLEGRVVPAAGLDAEWLEIGGMRGKGLATIAALPWRLGRAVAVAGAALRRQRPDVVLGMGGYVAGPVGLAARLAGRPLIIHEQNARAGMTNRFLARLGHRVLTGFPDALGARSEWVGNPIRTRIHRLESPQERYARREGAPRVLVLGGSQGARALNRYVPQALSAIGGGQPQVLHQAGELTLEEARTEYGRAGLDGAEVVPFIEDMAGAYAWADLVVARSGALTVAELAAAGVPAVLVPLPWAVDDHQTANAEWLCAAGAARRLLQPDLEQGALGPVLAELLGDRRRLAEMGEAARGVARPDATDRVATICEEVAHG.

Residues 13-15, asparagine 125, arginine 162, serine 190, isoleucine 244, 263-268, and glutamine 289 contribute to the UDP-N-acetyl-alpha-D-glucosamine site; these read TGG and ALTVAE.

Belongs to the glycosyltransferase 28 family. MurG subfamily.

Its subcellular location is the cell inner membrane. The catalysed reaction is di-trans,octa-cis-undecaprenyl diphospho-N-acetyl-alpha-D-muramoyl-L-alanyl-D-glutamyl-meso-2,6-diaminopimeloyl-D-alanyl-D-alanine + UDP-N-acetyl-alpha-D-glucosamine = di-trans,octa-cis-undecaprenyl diphospho-[N-acetyl-alpha-D-glucosaminyl-(1-&gt;4)]-N-acetyl-alpha-D-muramoyl-L-alanyl-D-glutamyl-meso-2,6-diaminopimeloyl-D-alanyl-D-alanine + UDP + H(+). It functions in the pathway cell wall biogenesis; peptidoglycan biosynthesis. In terms of biological role, cell wall formation. Catalyzes the transfer of a GlcNAc subunit on undecaprenyl-pyrophosphoryl-MurNAc-pentapeptide (lipid intermediate I) to form undecaprenyl-pyrophosphoryl-MurNAc-(pentapeptide)GlcNAc (lipid intermediate II). This Halorhodospira halophila (strain DSM 244 / SL1) (Ectothiorhodospira halophila (strain DSM 244 / SL1)) protein is UDP-N-acetylglucosamine--N-acetylmuramyl-(pentapeptide) pyrophosphoryl-undecaprenol N-acetylglucosamine transferase.